We begin with the raw amino-acid sequence, 355 residues long: Phosphoribosylformylglycinamidine cyclo-ligase (355 aa).

This sequence belongs to the AIR synthase family.

It is found in the cytoplasm. It carries out the reaction 2-formamido-N(1)-(5-O-phospho-beta-D-ribosyl)acetamidine + ATP = 5-amino-1-(5-phospho-beta-D-ribosyl)imidazole + ADP + phosphate + H(+). It functions in the pathway purine metabolism; IMP biosynthesis via de novo pathway; 5-amino-1-(5-phospho-D-ribosyl)imidazole from N(2)-formyl-N(1)-(5-phospho-D-ribosyl)glycinamide: step 2/2. This chain is Phosphoribosylformylglycinamidine cyclo-ligase, found in Hamiltonella defensa subsp. Acyrthosiphon pisum (strain 5AT).